The following is a 207-amino-acid chain: Small heat shock protein hspG7 (207 aa).

Residues 30–207 (KTIIDILPPM…YSNTIKININ (178 aa)) enclose the sHSP domain. Low complexity-rich tracts occupy residues 84–101 (QQQQ…SSST) and 122–135 (STTS…ATTT). A disordered region spans residues 84-149 (QQQQLVIEKS…EDENKTKSSD (66 aa)). The segment covering 136–149 (KENKEDENKTKSSD) has biased composition (basic and acidic residues).

Belongs to the small heat shock protein (HSP20) family.

The polypeptide is Small heat shock protein hspG7 (hspG7) (Dictyostelium discoideum (Social amoeba)).